Here is a 269-residue protein sequence, read N- to C-terminus: Probable ribosomal RNA small subunit methyltransferase A (269 aa).

6 residues coordinate S-adenosyl-L-methionine: H23, L25, G50, E71, D95, and N110.

Belongs to the class I-like SAM-binding methyltransferase superfamily. rRNA adenine N(6)-methyltransferase family. RsmA subfamily.

The protein resides in the cytoplasm. Functionally, specifically dimethylates two adjacent adenosines in the loop of a conserved hairpin near the 3'-end of 16S rRNA in the 30S particle. May play a critical role in biogenesis of 30S subunits. The polypeptide is Probable ribosomal RNA small subunit methyltransferase A (Pyrococcus abyssi (strain GE5 / Orsay)).